We begin with the raw amino-acid sequence, 131 residues long: Small ribosomal subunit protein uS8 (131 aa).

It belongs to the universal ribosomal protein uS8 family. In terms of assembly, part of the 30S ribosomal subunit. Contacts proteins S5 and S12.

One of the primary rRNA binding proteins, it binds directly to 16S rRNA central domain where it helps coordinate assembly of the platform of the 30S subunit. The polypeptide is Small ribosomal subunit protein uS8 (Prosthecochloris aestuarii (strain DSM 271 / SK 413)).